The chain runs to 612 residues: Sulfite reductase [NADPH] hemoprotein beta-component (612 aa).

Residues methionine 1 to glutamate 26 form a disordered region. Residues cysteine 469, cysteine 475, cysteine 514, and cysteine 518 each contribute to the [4Fe-4S] cluster site. Cysteine 518 serves as a coordination point for siroheme.

Belongs to the nitrite and sulfite reductase 4Fe-4S domain family. Alpha(8)-beta(8). The alpha component is a flavoprotein, the beta component is a hemoprotein. Siroheme is required as a cofactor. Requires [4Fe-4S] cluster as cofactor.

It catalyses the reaction hydrogen sulfide + 3 NADP(+) + 3 H2O = sulfite + 3 NADPH + 4 H(+). The protein operates within sulfur metabolism; hydrogen sulfide biosynthesis; hydrogen sulfide from sulfite (NADPH route): step 1/1. Component of the sulfite reductase complex that catalyzes the 6-electron reduction of sulfite to sulfide. This is one of several activities required for the biosynthesis of L-cysteine from sulfate. In Methylorubrum extorquens (strain CM4 / NCIMB 13688) (Methylobacterium extorquens), this protein is Sulfite reductase [NADPH] hemoprotein beta-component.